Here is a 110-residue protein sequence, read N- to C-terminus: Small ribosomal subunit protein uS17 (110 aa).

Belongs to the universal ribosomal protein uS17 family. As to quaternary structure, part of the 30S ribosomal subunit.

One of the primary rRNA binding proteins, it binds specifically to the 5'-end of 16S ribosomal RNA. The sequence is that of Small ribosomal subunit protein uS17 from Haloquadratum walsbyi (strain DSM 16790 / HBSQ001).